We begin with the raw amino-acid sequence, 438 residues long: Transposon Ty2-LR1 Gag polyprotein (438 aa).

Polar residues-rich tracts occupy residues methionine 1 to histidine 11, alanine 19 to asparagine 39, and lysine 49 to threonine 60. Disordered stretches follow at residues methionine 1–glutamine 86, lysine 364–histidine 397, and serine 419–isoleucine 438. An RNA-binding region spans residues glutamate 295–histidine 397. Low complexity predominate over residues threonine 369 to arginine 381.

Homotrimer.

It localises to the cytoplasm. Capsid protein (CA) is the structural component of the virus-like particle (VLP), forming the shell that encapsulates the retrotransposons dimeric RNA genome. The particles are assembled from trimer-clustered units and there are holes in the capsid shells that allow for the diffusion of macromolecules. CA also has nucleocapsid-like chaperone activity, promoting primer tRNA(i)-Met annealing to the multipartite primer-binding site (PBS), dimerization of Ty2 RNA and initiation of reverse transcription. The protein is Transposon Ty2-LR1 Gag polyprotein (TY2A-LR1) of Saccharomyces cerevisiae (strain ATCC 204508 / S288c) (Baker's yeast).